The sequence spans 517 residues: Crotonobetaine/carnitine--CoA ligase (517 aa).

The protein belongs to the ATP-dependent AMP-binding enzyme family.

It carries out the reaction 4-(trimethylamino)butanoate + ATP + CoA = 4-(trimethylamino)butanoyl-CoA + AMP + diphosphate. The enzyme catalyses crotonobetaine + ATP + CoA = crotonobetainyl-CoA + AMP + diphosphate. It catalyses the reaction (R)-carnitine + ATP + CoA = (R)-carnitinyl-CoA + AMP + diphosphate. The protein operates within amine and polyamine metabolism; carnitine metabolism. Functionally, catalyzes the transfer of CoA to carnitine, generating the initial carnitinyl-CoA needed for the CaiB reaction cycle. Also has activity toward crotonobetaine and gamma-butyrobetaine. In Escherichia coli O17:K52:H18 (strain UMN026 / ExPEC), this protein is Crotonobetaine/carnitine--CoA ligase.